The primary structure comprises 308 residues: MKWIEVQVTTTQEAEEAVTNIMHELGAGGVVIKNPNDVKLLAQSDNWDYLDSSLFEEEGNIKVFAYFPIASDTTDKINILKDRIVELKSFGIDIGNFDVKVSEVDEADWENNWKQYYKPLKIGKKIVIKPSWEEYVSQGEEIIIELDPGMAFGTGTHETTKMCLEFLEDIVMPESIVFDVGCGSGILSITSSKLGAKEVYAADIDEVSVEVARQNVELNNLQNVKVFKSDLLGEFRGKADIIVANIIADVIIRLSAEAPKYLKEEGLFLASGIIKSRKKEVMEKIQPFFEILQIKEEGEWCTILSRKK.

S-adenosyl-L-methionine-binding residues include threonine 160, glycine 181, aspartate 203, and asparagine 245.

Belongs to the methyltransferase superfamily. PrmA family.

The protein localises to the cytoplasm. It catalyses the reaction L-lysyl-[protein] + 3 S-adenosyl-L-methionine = N(6),N(6),N(6)-trimethyl-L-lysyl-[protein] + 3 S-adenosyl-L-homocysteine + 3 H(+). Methylates ribosomal protein L11. The protein is Ribosomal protein L11 methyltransferase of Thermoanaerobacter sp. (strain X514).